The primary structure comprises 222 residues: Probable GTP-binding protein EngB (222 aa).

An EngB-type G domain is found at 23 to 217 (NASEIVFLGR…REEIVKYTLG (195 aa)). GTP-binding positions include 31 to 38 (GRSNVGKS), 57 to 61 (GKTQL), 82 to 85 (DLPG), 152 to 155 (TKAD), and 191 to 193 (FSA). Mg(2+)-binding residues include serine 38 and threonine 59.

It belongs to the TRAFAC class TrmE-Era-EngA-EngB-Septin-like GTPase superfamily. EngB GTPase family. The cofactor is Mg(2+).

Its function is as follows. Necessary for normal cell division and for the maintenance of normal septation. This is Probable GTP-binding protein EngB from Helicobacter hepaticus (strain ATCC 51449 / 3B1).